The chain runs to 237 residues: Ribonuclease PH (237 aa).

Residues R86 and 124–126 contribute to the phosphate site; that span reads GTR.

The protein belongs to the RNase PH family. As to quaternary structure, homohexameric ring arranged as a trimer of dimers.

It catalyses the reaction tRNA(n+1) + phosphate = tRNA(n) + a ribonucleoside 5'-diphosphate. Phosphorolytic 3'-5' exoribonuclease that plays an important role in tRNA 3'-end maturation. Removes nucleotide residues following the 3'-CCA terminus of tRNAs; can also add nucleotides to the ends of RNA molecules by using nucleoside diphosphates as substrates, but this may not be physiologically important. Probably plays a role in initiation of 16S rRNA degradation (leading to ribosome degradation) during starvation. The protein is Ribonuclease PH of Bradyrhizobium diazoefficiens (strain JCM 10833 / BCRC 13528 / IAM 13628 / NBRC 14792 / USDA 110).